Reading from the N-terminus, the 255-residue chain is tRNA (guanine-N(7)-)-methyltransferase (255 aa).

The segment at Met1–Pro31 is disordered. Residues Ile18 to Asp27 are compositionally biased toward acidic residues. Residues Glu86, Glu111, Asp138, and Asp161 each coordinate S-adenosyl-L-methionine. Asp161 is an active-site residue. Substrate contacts are provided by residues Lys165, Asp197, and Thr232 to Glu235.

This sequence belongs to the class I-like SAM-binding methyltransferase superfamily. TrmB family.

It catalyses the reaction guanosine(46) in tRNA + S-adenosyl-L-methionine = N(7)-methylguanosine(46) in tRNA + S-adenosyl-L-homocysteine. The protein operates within tRNA modification; N(7)-methylguanine-tRNA biosynthesis. Its function is as follows. Catalyzes the formation of N(7)-methylguanine at position 46 (m7G46) in tRNA. This is tRNA (guanine-N(7)-)-methyltransferase from Burkholderia cenocepacia (strain HI2424).